The primary structure comprises 251 residues: Pyruvate formate-lyase-activating enzyme (251 aa).

The Radical SAM core domain maps to 15-244; it reads VDGPGLRYIL…KAAYRYVNFK (230 aa). Positions 29, 33, and 36 each coordinate [4Fe-4S] cluster. S-adenosyl-L-methionine-binding positions include 35 to 37, Gly-79, 134 to 136, and His-207; these read YCH and DIK.

The protein belongs to the organic radical-activating enzymes family. The cofactor is [4Fe-4S] cluster.

It is found in the cytoplasm. It catalyses the reaction glycyl-[formate C-acetyltransferase] + reduced [flavodoxin] + S-adenosyl-L-methionine = glycin-2-yl radical-[formate C-acetyltransferase] + semiquinone [flavodoxin] + 5'-deoxyadenosine + L-methionine + H(+). Its function is as follows. Activation of pyruvate formate-lyase under anaerobic conditions by generation of an organic free radical, using S-adenosylmethionine and reduced flavodoxin as cosubstrates to produce 5'-deoxy-adenosine. This chain is Pyruvate formate-lyase-activating enzyme (pflA), found in Staphylococcus aureus (strain N315).